The chain runs to 138 residues: Basic phospholipase A2 myotoxin I (138 aa).

The first 16 residues, 1–16 (MRTLWIMAVLLVGVEG), serve as a signal peptide directing secretion. Cystine bridges form between Cys-42-Cys-131, Cys-44-Cys-60, Cys-59-Cys-111, Cys-65-Cys-138, Cys-66-Cys-104, Cys-73-Cys-97, and Cys-91-Cys-102. Ca(2+)-binding residues include Tyr-43, Gly-45, and Gly-47. The active site involves His-63. Asp-64 contributes to the Ca(2+) binding site. Asp-105 is a catalytic residue.

It belongs to the phospholipase A2 family. Group II subfamily. D49 sub-subfamily. In terms of assembly, monomer. Homodimer; non-covalently linked (alternative/compact dimer conformation). Requires Ca(2+) as cofactor. As to expression, expressed by the venom gland.

It localises to the secreted. It carries out the reaction a 1,2-diacyl-sn-glycero-3-phosphocholine + H2O = a 1-acyl-sn-glycero-3-phosphocholine + a fatty acid + H(+). High level of membrane cholesterol content reduces cytolytic activity, whereas low level of membrane cholesterol content increases cytolytic activity. Functionally, snake venom phospholipase A2 (PLA2) that displays local myotoxic activity. It also displays anticoagulant action in plasma and edema-inducing activities. In addition, it shows cytotoxic activity to a variety of cell types and bactericidal activity to a variety of Gram-negative and Gram-positive bacteria. PLA2 catalyzes the calcium-dependent hydrolysis of the 2-acyl groups in 3-sn-phosphoglycerides. The chain is Basic phospholipase A2 myotoxin I from Bothrops asper (Terciopelo).